Here is a 186-residue protein sequence, read N- to C-terminus: Alkyl hydroperoxide reductase AhpD (186 aa).

C132 serves as the catalytic Proton donor. C132 and C135 are oxidised to a cystine. C135 (cysteine sulfenic acid (-SOH) intermediate) is an active-site residue.

This sequence belongs to the AhpD family.

It carries out the reaction N(6)-[(R)-dihydrolipoyl]-L-lysyl-[lipoyl-carrier protein] + a hydroperoxide = N(6)-[(R)-lipoyl]-L-lysyl-[lipoyl-carrier protein] + an alcohol + H2O. Its function is as follows. Antioxidant protein with alkyl hydroperoxidase activity. Required for the reduction of the AhpC active site cysteine residues and for the regeneration of the AhpC enzyme activity. The chain is Alkyl hydroperoxide reductase AhpD from Anaeromyxobacter dehalogenans (strain 2CP-C).